Consider the following 161-residue polypeptide: Regulator of ribonuclease activity A (161 aa).

The protein belongs to the RraA family. In terms of assembly, homotrimer. Binds to both RNA-binding sites in the C-terminal region of Rne and to RhlB.

It localises to the cytoplasm. Its function is as follows. Globally modulates RNA abundance by binding to RNase E (Rne) and regulating its endonucleolytic activity. Can modulate Rne action in a substrate-dependent manner by altering the composition of the degradosome. Modulates RNA-binding and helicase activities of the degradosome. This chain is Regulator of ribonuclease activity A, found in Photobacterium profundum (strain SS9).